The sequence spans 457 residues: RuvB-like helicase 1 (457 aa).

Position 73–80 (73–80) interacts with ATP; the sequence is GGPSTGKT.

It belongs to the RuvB family. In terms of assembly, may form heterododecamers with RVB2. Component of the SWR1 chromatin remodeling complex, the INO80 chromatin remodeling complex, and of the R2TP complex.

It is found in the nucleus. It catalyses the reaction ATP + H2O = ADP + phosphate + H(+). Functionally, DNA helicase which participates in several chromatin remodeling complexes, including the SWR1 and the INO80 complexes. The SWR1 complex mediates the ATP-dependent exchange of histone H2A for the H2A variant HZT1 leading to transcriptional regulation of selected genes by chromatin remodeling. The INO80 complex remodels chromatin by shifting nucleosomes and is involved in DNA repair. Also involved in pre-rRNA processing. The chain is RuvB-like helicase 1 (RVB1) from Kluyveromyces lactis (strain ATCC 8585 / CBS 2359 / DSM 70799 / NBRC 1267 / NRRL Y-1140 / WM37) (Yeast).